Consider the following 314-residue polypeptide: uncharacterized protein (314 aa).

The next 2 helical transmembrane spans lie at 23-43 (LALG…MALF) and 98-118 (MASG…GPLT). A compositionally biased stretch (gly residues) spans 165-184 (GLGSGAGGGDVGGGGAGGTT). The segment at 165–314 (GLGSGAGGGD…APDEKTDAGE (150 aa)) is disordered. Residues 190-202 (GPPPVPTSSPPTT) show a composition bias toward pro residues. Composition is skewed to low complexity over residues 203–212 (PAGAPTKSAT) and 219–232 (ASPA…AGMP). A helical membrane pass occupies residues 221–241 (PASAHMGAAGMPMVPPGAMGA). The span at 294–314 (LLPEHKDFGRIAPDEKTDAGE) shows a compositional bias: basic and acidic residues.

Its subcellular location is the cell membrane. This is an uncharacterized protein from Mycobacterium tuberculosis (strain ATCC 25618 / H37Rv).